The following is a 273-amino-acid chain: Homeobox protein Nkx-2.2 (273 aa).

Disordered stretches follow at residues 1–56 (MSLT…LDAV) and 90–131 (LAAG…KRKR). Over residues 20 to 38 (DTNDEEGSVAEGPEEENEG) the composition is skewed to acidic residues. A DNA-binding region (homeobox) is located at residues 128 to 187 (KRKRRVLFSKAQTYELERRFRQQRYLSAPEREHLASLIRLTPTQVKIWFQNHRYKMKRAR).

The protein belongs to the NK-2 homeobox family. As to quaternary structure, interacts with OLIG2.

The protein resides in the nucleus. Transcriptional activator involved in the development of insulin-producting beta cells in the endocrine pancreas. May also be involved in specifying diencephalic neuromeric boundaries, and in controlling the expression of genes that play a role in axonal guidance. Binds to elements within the NEUROD1 promoter. The chain is Homeobox protein Nkx-2.2 (NKX2-2) from Homo sapiens (Human).